Consider the following 328-residue polypeptide: COP9 signalosome complex subunit 6 (328 aa).

The MPN domain maps to V42–I175.

This sequence belongs to the peptidase M67A family. CSN6 subfamily. As to quaternary structure, component of the CSN complex, composed of COPS1/GPS1, COPS2, COPS3, COPS4, COPS5, COPS6, COPS7 (COPS7A or COPS7B), COPS8 and COPS9. In the complex, it probably interacts directly with COPS2, COPS4, COPS5, COPS7 (COPS7A or COPS7B) and COPS9. Interacts with the translation initiation factor EIF3S6. Interacts weakly with RBX1. Directly interacts with COP1 and 14-3-3 protein sigma/SFN. Interacts with ERCC6.

It is found in the cytoplasm. Its subcellular location is the nucleus. In terms of biological role, component of the COP9 signalosome complex (CSN), a complex involved in various cellular and developmental processes. The CSN complex is an essential regulator of the ubiquitin (Ubl) conjugation pathway by mediating the deneddylation of the cullin subunits of SCF-type E3 ligase complexes, leading to decrease the Ubl ligase activity of SCF-type complexes such as SCF, CSA or DDB2. The complex is also involved in phosphorylation of p53/TP53, c-jun/JUN, IkappaBalpha/NFKBIA, ITPK1 and IRF8, possibly via its association with CK2 and PKD kinases. CSN-dependent phosphorylation of TP53 and JUN promotes and protects degradation by the Ubl system, respectively. Has some glucocorticoid receptor-responsive activity. Stabilizes COP1 through reducing COP1 auto-ubiquitination and decelerating COP1 turnover rate, hence regulates the ubiquitination of COP1 targets, including SFN. The chain is COP9 signalosome complex subunit 6 (COPS6) from Pongo abelii (Sumatran orangutan).